Here is a 290-residue protein sequence, read N- to C-terminus: Phosphoribulokinase 1 (290 aa).

12 to 20 (GSSGAGTST) lines the ATP pocket.

Belongs to the phosphoribulokinase family. Homooctamer.

It carries out the reaction D-ribulose 5-phosphate + ATP = D-ribulose 1,5-bisphosphate + ADP + H(+). Its pathway is carbohydrate biosynthesis; Calvin cycle. Its activity is regulated as follows. Activated by NADH and inhibited by phosphoenolpyruvate. In Cereibacter sphaeroides (Rhodobacter sphaeroides), this protein is Phosphoribulokinase 1 (prkA).